The sequence spans 347 residues: Ribosomal RNA small subunit methyltransferase C (347 aa).

It belongs to the methyltransferase superfamily. RsmC family. Monomer.

Its subcellular location is the cytoplasm. The catalysed reaction is guanosine(1207) in 16S rRNA + S-adenosyl-L-methionine = N(2)-methylguanosine(1207) in 16S rRNA + S-adenosyl-L-homocysteine + H(+). In terms of biological role, specifically methylates the guanine in position 1207 of 16S rRNA in the 30S particle. This Yersinia enterocolitica serotype O:8 / biotype 1B (strain NCTC 13174 / 8081) protein is Ribosomal RNA small subunit methyltransferase C.